The following is a 241-amino-acid chain: tRNA (guanine-N(7)-)-methyltransferase (241 aa).

Gly-61, Glu-84, Arg-86, Asn-117, Ala-118, and Leu-137 together coordinate S-adenosyl-L-methionine. The active site involves Asp-140. The segment at 141–149 (PHFKKTKHK) is alphaC helix. Positions 215 and 217 each coordinate S-adenosyl-L-methionine. An alpha6 helix region spans residues 215–223 (TEEGKKVQR).

Belongs to the class I-like SAM-binding methyltransferase superfamily. TrmB family. In terms of assembly, catalytic component of the METTL1-WDR4 complex, composed of mettl1 and wdr4.

It is found in the nucleus. The enzyme catalyses guanosine(46) in tRNA + S-adenosyl-L-methionine = N(7)-methylguanosine(46) in tRNA + S-adenosyl-L-homocysteine. It carries out the reaction a guanosine in mRNA + S-adenosyl-L-methionine = an N(7)-methylguanosine in mRNA + S-adenosyl-L-homocysteine. The catalysed reaction is a guanosine in miRNA + S-adenosyl-L-methionine = an N(7)-methylguanosine in miRNA + S-adenosyl-L-homocysteine. It participates in tRNA modification; N(7)-methylguanine-tRNA biosynthesis. In terms of biological role, catalytic component of METTL1-WDR4 methyltransferase complex that mediates the formation of N(7)-methylguanine in a subset of RNA species, such as tRNAs, mRNAs and microRNAs (miRNAs). Catalyzes the formation of N(7)-methylguanine at position 46 (m7G46) in a large subset of tRNAs that contain the 5'-RAGGU-3' motif within the variable loop. M7G46 interacts with C13-G22 in the D-loop to stabilize tRNA tertiary structure and protect tRNAs from decay. Also acts as a methyltransferase for a subset of internal N(7)-methylguanine in mRNAs. Internal N(7)-methylguanine methylation of mRNAs in response to stress promotes their relocalization to stress granules, thereby suppressing their translation. Also methylates a specific subset of miRNAs. This Danio rerio (Zebrafish) protein is tRNA (guanine-N(7)-)-methyltransferase (mettl1).